A 183-amino-acid polypeptide reads, in one-letter code: Peptidyl-tRNA hydrolase (183 aa).

Position 14 (tyrosine 14) interacts with tRNA. Histidine 19 functions as the Proton acceptor in the catalytic mechanism. TRNA-binding residues include tyrosine 61, asparagine 63, and asparagine 109.

The protein belongs to the PTH family. In terms of assembly, monomer.

It localises to the cytoplasm. It carries out the reaction an N-acyl-L-alpha-aminoacyl-tRNA + H2O = an N-acyl-L-amino acid + a tRNA + H(+). In terms of biological role, hydrolyzes ribosome-free peptidyl-tRNAs (with 1 or more amino acids incorporated), which drop off the ribosome during protein synthesis, or as a result of ribosome stalling. Its function is as follows. Catalyzes the release of premature peptidyl moieties from peptidyl-tRNA molecules trapped in stalled 50S ribosomal subunits, and thus maintains levels of free tRNAs and 50S ribosomes. In Aliarcobacter butzleri (strain RM4018) (Arcobacter butzleri), this protein is Peptidyl-tRNA hydrolase.